A 677-amino-acid polypeptide reads, in one-letter code: MHSWRISKFKLGRSKEDDGSSEDENEKSWGNGLFHFHHGEKHHDGSPKNHNHEHEHHIRKINTNETLPSSLSSPKLRNDASFKNPSGIGNDNSKASERKASQSSTETQGPSSESGLMTVKVYSGKDFTLPFPITSNSTILQKLLSSGILTSSSNDASEVAAIMRQLPRYKRVDQDSAGEGLIDRAFATKFIPSSILLPGSTNSSPLLYFTIEFDNSITTISPDMGTMEQPVFNKISTFDVTRKLRFLKIDVFARIPSLLLPSKNWQQEIGEQDEVLKEILKKINTNQDIHLDSFHLPLNLKIDSAAQIRLYNHHWISLERGYGKLNITVDYKPSKNKPLSIDDFDLLKVIGKGSFGKVMQVRKKDTQKIYALKALRKAYIVSKCEVTHTLAERTVLARVDCPFIVPLKFSFQSPEKLYLVLAFINGGELFYHLQHEGRFSLARSRFYIAELLCALDSLHKLDVIYRDLKPENILLDYQGHIALCDFGLCKLNMKDNDKTDTFCGTPEYLAPEILLGQGYTKTVDWWTLGILLYEMMTGLPPYYDENVPVMYKKILQQPLLFPDGFDPAAKDLLIGLLSRDPSRRLGVNGTDEIRNHPFFKDISWKKLLLKGYIPPYKPIVKSEIDTANFDQEFTKEKPIDSVVDEYLSASIQKQFGGWTYIGDEQLGDSPSQGRSIS.

Basic residues predominate over residues 1-12 (MHSWRISKFKLG). A disordered region spans residues 1-115 (MHSWRISKFK…ETQGPSSESG (115 aa)). The span at 41 to 56 (KHHDGSPKNHNHEHEH) shows a compositional bias: basic and acidic residues. 2 stretches are compositionally biased toward polar residues: residues 61–93 (INTN…NDNS) and 101–115 (SQSS…SESG). Thr-63 and Thr-66 each carry phosphothreonine. At Ser-72 the chain carries Phosphoserine. The Protein kinase domain maps to 344-599 (FDLLKVIGKG…TDEIRNHPFF (256 aa)). Residues 350–358 (IGKGSFGKV) and Lys-373 each bind ATP. Asp-467 serves as the catalytic Proton acceptor. Residue Thr-499 is modified to Phosphothreonine. At Thr-501 the chain carries Phosphothreonine; by PKH2. Positions 600–670 (KDISWKKLLL…IGDEQLGDSP (71 aa)) constitute an AGC-kinase C-terminal domain. Ser-641 carries the phosphoserine; by TOR2 modification. At Ser-650 the chain carries Phosphoserine. Thr-659 carries the phosphothreonine; by TOR2 modification. Residue Ser-669 is modified to Phosphoserine.

This sequence belongs to the protein kinase superfamily. AGC Ser/Thr protein kinase family. RAC subfamily. In terms of processing, autophosphorylated. Phosphorylated by PKH2 and TOR2.

The protein resides in the cytoplasm. The catalysed reaction is L-seryl-[protein] + ATP = O-phospho-L-seryl-[protein] + ADP + H(+). The enzyme catalyses L-threonyl-[protein] + ATP = O-phospho-L-threonyl-[protein] + ADP + H(+). Its activity is regulated as follows. Activated by phytosphingosine (PHS), a sphingoid long chain base. Activated by PKH2 phosphorylation. Kinase activity is regulated by TOR2 via direct phosphorylation of Ser-641 and Thr-659. Its function is as follows. Plays an essential role in the proliferation of yeast cells. Involved in a signaling pathway, required for optimal cell wall integrity, that acts in parallel with the PKC1-SLT2-dependent pathway. A substrate of TOR complex 2 (TORC2) and required for TORC2 to regulate spatial aspects of cell growth. Phosphorylation of residue Thr-501 is indispensable for function. May act as a downstream kinase in the sphingolipid-mediated signaling pathway. The chain is Serine/threonine-protein kinase YPK2/YKR2 (YPK2) from Saccharomyces cerevisiae (strain ATCC 204508 / S288c) (Baker's yeast).